A 216-amino-acid chain; its full sequence is Octanoyltransferase (216 aa).

The BPL/LPL catalytic domain occupies aspartate 29–proline 209. Substrate contacts are provided by residues arginine 68–histidine 75, alanine 140–glycine 142, and glycine 153–alanine 155. Cysteine 171 serves as the catalytic Acyl-thioester intermediate.

The protein belongs to the LipB family.

The protein localises to the cytoplasm. The enzyme catalyses octanoyl-[ACP] + L-lysyl-[protein] = N(6)-octanoyl-L-lysyl-[protein] + holo-[ACP] + H(+). It functions in the pathway protein modification; protein lipoylation via endogenous pathway; protein N(6)-(lipoyl)lysine from octanoyl-[acyl-carrier-protein]: step 1/2. Catalyzes the transfer of endogenously produced octanoic acid from octanoyl-acyl-carrier-protein onto the lipoyl domains of lipoate-dependent enzymes. Lipoyl-ACP can also act as a substrate although octanoyl-ACP is likely to be the physiological substrate. This Rhodospirillum rubrum (strain ATCC 11170 / ATH 1.1.1 / DSM 467 / LMG 4362 / NCIMB 8255 / S1) protein is Octanoyltransferase.